The sequence spans 143 residues: Fido domain-containing protein DDB_G0283145 (143 aa).

Positions 1 to 128 (MKGIIVSDGV…TSHLALIILN (128 aa)) constitute a Fido domain. Residues 49 to 69 (SSPYAVAAWLLHAFVSIHPFI) traverse the membrane as a helical segment.

The protein resides in the membrane. The protein is Fido domain-containing protein DDB_G0283145 of Dictyostelium discoideum (Social amoeba).